Reading from the N-terminus, the 249-residue chain is Protein TIFY 10B (249 aa).

The region spanning 113–148 (PESQSAPLTIFYGGRVMVFDDFSAEKAKEVIDLANK) is the Tify domain. The short motif at 204 to 229 (PIARRASLHRFLEKRKDRITSKAPYQ) is the Jas element. A Nuclear localization signal motif is present at residues 206-213 (ARRASLHR). A disordered region spans residues 225-249 (KAPYQIDGSAEASSKPTNPAWLSSR). The segment covering 235 to 249 (EASSKPTNPAWLSSR) has biased composition (polar residues).

It belongs to the TIFY/JAZ family. Homo- and heterodimer. Interacts with COI1, MYC2, MYC3, MYC4, AFPH2/NINJA, TIFY10A/JAZ1, TIFY6B/JAZ3, TIFY11A/JAZ5, TIFY11B/JAZ6, TIFY5A/JAZ8, TIFY7/JAZ9, TIFY9/JAZ10, TIFY3A/JAZ11 and TIFY3B/JAZ12. Interacts with RHD6 and RSL1. In terms of assembly, (Microbial infection) Interacts with the pathogenic Pseudomonas syringae HopZ1a protein. Post-translationally, (Microbial infection) Acetylated by Pseudomonas syringae HopZ1a. Ubiquitinated. Targeted for degradation by the SCF(COI1) E3 ubiquitin ligase-proteasome pathway during jasmonate signaling. Expressed in cotyledons, hypocotyls, roots, sepals, petal vascular tissue and stigmas of developing flowers. Expressed in stamen filaments after jasmonic acid treatment.

Its subcellular location is the nucleus. Its function is as follows. Repressor of jasmonate responses. Jasmonoyl-isoleucine (JA-Ile) specifically promotes COI1-TIFY10B/JAZ2 interaction. Activated by MYC2, MYC3 and MYC4 transcription factors. Interacts with and suppresses RHD6 and RSL1 transcription factor activities to negatively regulate jasmonate-stimulated root hair development. The protein is Protein TIFY 10B of Arabidopsis thaliana (Mouse-ear cress).